A 277-amino-acid polypeptide reads, in one-letter code: Bleomycin hydrolase (277 aa).

Residue Cys53 is part of the active site.

The protein belongs to the peptidase C1 family. In terms of assembly, homohexamer. Interacts with NUDT12 (via ANK repeats).

Its subcellular location is the cytoplasm. The protein resides in the cytoplasmic granule. The enzyme catalyses Inactivates bleomycin B2 (a cytotoxic glycometallopeptide) by hydrolysis of a carboxyamide bond of beta-aminoalanine, but also shows general aminopeptidase activity. The specificity varies somewhat with source, but amino acid arylamides of Met, Leu and Ala are preferred.. Its activity is regulated as follows. Strongly inhibited by leupeptin, puromycin, NEM, and divalent cations. Its function is as follows. The normal physiological role of BLM hydrolase is unknown, but it catalyzes the inactivation of the antitumor drug BLM (a glycopeptide) by hydrolyzing the carboxamide bond of its B-aminoalaninamide moiety thus protecting normal and malignant cells from BLM toxicity. This Oryctolagus cuniculus (Rabbit) protein is Bleomycin hydrolase (BLMH).